A 510-amino-acid chain; its full sequence is ATP synthase subunit alpha (510 aa).

169–176 (GDRQTGKT) lines the ATP pocket.

It belongs to the ATPase alpha/beta chains family. F-type ATPases have 2 components, CF(1) - the catalytic core - and CF(0) - the membrane proton channel. CF(1) has five subunits: alpha(3), beta(3), gamma(1), delta(1), epsilon(1). CF(0) has three main subunits: a(1), b(2) and c(9-12). The alpha and beta chains form an alternating ring which encloses part of the gamma chain. CF(1) is attached to CF(0) by a central stalk formed by the gamma and epsilon chains, while a peripheral stalk is formed by the delta and b chains.

The protein localises to the cell membrane. It catalyses the reaction ATP + H2O + 4 H(+)(in) = ADP + phosphate + 5 H(+)(out). Functionally, produces ATP from ADP in the presence of a proton gradient across the membrane. The alpha chain is a regulatory subunit. The polypeptide is ATP synthase subunit alpha (Buchnera aphidicola subsp. Schizaphis graminum (strain Sg)).